Consider the following 169-residue polypeptide: MAILKICTYPDPVLRKETVAITVFDEKLVKLTEDMAETMYDAPGIGLAAPQIGESLKLVVVSTARREDSKQEYMVMANPEIVEKEESQVDEEGCLSVPELLAMVKRYRKIKVNYQDINGEPCSMTVEDRFAVVLQHEIDHLNGILFLDHLSSLKRNLYKKKVKKWFLPR.

2 residues coordinate Fe cation: Cys94 and His136. Glu137 is a catalytic residue. His140 is a binding site for Fe cation.

It belongs to the polypeptide deformylase family. Fe(2+) serves as cofactor.

It carries out the reaction N-terminal N-formyl-L-methionyl-[peptide] + H2O = N-terminal L-methionyl-[peptide] + formate. Its function is as follows. Removes the formyl group from the N-terminal Met of newly synthesized proteins. Requires at least a dipeptide for an efficient rate of reaction. N-terminal L-methionine is a prerequisite for activity but the enzyme has broad specificity at other positions. The polypeptide is Peptide deformylase (Desulfotalea psychrophila (strain LSv54 / DSM 12343)).